The primary structure comprises 615 residues: DNA mismatch repair protein MutL (615 aa).

Residues phenylalanine 363 to tyrosine 397 are disordered. Over residues proline 378–proline 391 the composition is skewed to low complexity.

It belongs to the DNA mismatch repair MutL/HexB family.

Functionally, this protein is involved in the repair of mismatches in DNA. It is required for dam-dependent methyl-directed DNA mismatch repair. May act as a 'molecular matchmaker', a protein that promotes the formation of a stable complex between two or more DNA-binding proteins in an ATP-dependent manner without itself being part of a final effector complex. The sequence is that of DNA mismatch repair protein MutL from Escherichia coli O157:H7 (strain EC4115 / EHEC).